Reading from the N-terminus, the 210-residue chain is Probable transcriptional regulator ycf29 (210 aa).

Residues Asn-3–Leu-119 form the Response regulatory domain. Position 52 is a 4-aspartylphosphate (Asp-52). Residues Ser-142 to Asn-207 form the HTH luxR-type domain.

The protein resides in the plastid. Its subcellular location is the cyanelle. This Cyanophora paradoxa protein is Probable transcriptional regulator ycf29 (ycf29).